The following is a 76-amino-acid chain: DNA-directed RNA polymerase subunit epsilon (76 aa).

It belongs to the RNA polymerase subunit epsilon family. In terms of assembly, RNAP is composed of a core of 2 alpha, a beta and a beta' subunit. The core is associated with a delta subunit, and at least one of epsilon or omega. When a sigma factor is associated with the core the holoenzyme is formed, which can initiate transcription.

It carries out the reaction RNA(n) + a ribonucleoside 5'-triphosphate = RNA(n+1) + diphosphate. Functionally, a non-essential component of RNA polymerase (RNAP). The chain is DNA-directed RNA polymerase subunit epsilon from Lactococcus lactis subsp. cremoris (strain MG1363).